A 117-amino-acid polypeptide reads, in one-letter code: Large ribosomal subunit protein bL20 (117 aa).

Belongs to the bacterial ribosomal protein bL20 family.

Its function is as follows. Binds directly to 23S ribosomal RNA and is necessary for the in vitro assembly process of the 50S ribosomal subunit. It is not involved in the protein synthesizing functions of that subunit. In Actinobacillus succinogenes (strain ATCC 55618 / DSM 22257 / CCUG 43843 / 130Z), this protein is Large ribosomal subunit protein bL20.